Reading from the N-terminus, the 242-residue chain is ATP synthase subunit a (242 aa).

The next 6 membrane-spanning stretches (helical) occupy residues 29–49, 84–104, 114–134, 140–160, 189–209, and 210–230; these read SAAYMLLASVLALTYFYLAFS, FVPVIFTLFVFILFCNLFGMI, IIITFALAILVFLMVTIVGFV, FLSLFLPHGTPLWLAPLMIII, VIASFVVTLMIYLKFLPIPLM, and VILIGFEIFVAILQAYIFTIL.

The protein belongs to the ATPase A chain family. In terms of assembly, F-type ATPases have 2 components, CF(1) - the catalytic core - and CF(0) - the membrane proton channel. CF(1) has five subunits: alpha(3), beta(3), gamma(1), delta(1), epsilon(1). CF(0) has three main subunits: a(1), b(2) and c(9-12). The alpha and beta chains form an alternating ring which encloses part of the gamma chain. CF(1) is attached to CF(0) by a central stalk formed by the gamma and epsilon chains, while a peripheral stalk is formed by the delta and b chains.

The protein resides in the cell inner membrane. Its function is as follows. Key component of the proton channel; it plays a direct role in the translocation of protons across the membrane. This is ATP synthase subunit a from Rickettsia bellii (strain RML369-C).